Here is a 68-residue protein sequence, read N- to C-terminus: Large ribosomal subunit protein uL29 (68 aa).

This sequence belongs to the universal ribosomal protein uL29 family.

In Finegoldia magna (strain ATCC 29328 / DSM 20472 / WAL 2508) (Peptostreptococcus magnus), this protein is Large ribosomal subunit protein uL29.